The chain runs to 951 residues: Protein translocase subunit SecA (951 aa).

ATP is bound by residues Gln90, 108–112, and Asp509; that span reads GEGKT.

The protein belongs to the SecA family. As to quaternary structure, monomer and homodimer. Part of the essential Sec protein translocation apparatus which comprises SecA, SecYEG and auxiliary proteins SecDF. Other proteins may also be involved.

The protein localises to the cell inner membrane. Its subcellular location is the cellular thylakoid membrane. It is found in the cytoplasm. It carries out the reaction ATP + H2O + cellular proteinSide 1 = ADP + phosphate + cellular proteinSide 2.. Part of the Sec protein translocase complex. Interacts with the SecYEG preprotein conducting channel. Has a central role in coupling the hydrolysis of ATP to the transfer of proteins into and across the cell membrane, serving as an ATP-driven molecular motor driving the stepwise translocation of polypeptide chains across the membrane. Its function is as follows. Probably participates in protein translocation into and across both the cytoplasmic and thylakoid membranes in cyanobacterial cells. The sequence is that of Protein translocase subunit SecA from Prochlorococcus marinus (strain MIT 9303).